The chain runs to 741 residues: Probable basic-leucine zipper transcription factor I (741 aa).

Residues 77-117 adopt a coiled-coil conformation; sequence QIIEQIQFLQQQQQQQHDQIQQQLHNFQQQYQQQYQQRQQQ. 4 stretches are compositionally biased toward low complexity: residues 153–164, 172–237, 277–290, and 381–390; these read QQPPQSLQQQQQ, PQQQ…QIQK, IQQQ…IQQK, and QQQQQQQQQQ. Disordered regions lie at residues 153–237, 277–305, and 349–390; these read QQPP…QIQK, IQQQ…SNSM, and KQKE…QQQQ. The 64-residue stretch at 429–492 folds into the bZIP domain; sequence ESKKSIKRIN…HEGGTMAILK (64 aa). Residues 431–432 form a basic motif region; it reads KK. Positions 434–441 are leucine-zipper; the sequence is IKRINQNI.

Belongs to the bZIP family.

The protein resides in the nucleus. In terms of biological role, probable transcriptional regulator. This chain is Probable basic-leucine zipper transcription factor I (bzpI), found in Dictyostelium discoideum (Social amoeba).